Here is a 59-residue protein sequence, read N- to C-terminus: Small integral membrane protein 30 (59 aa).

Residues 1 to 24 (MTSVSTQLSLVLMSLLLVLPVVEA) form the signal peptide. Residues 25-29 (VEAGD) lie on the Extracellular side of the membrane. Residues 30–50 (AIALLLGVVLSITGICACLGV) traverse the membrane as a helical segment. Over 51-59 (YARKRNGQM) the chain is Cytoplasmic.

Interacts (via transmembrane domain) with antiviral protein MAVS (via transmembrane domain); the interaction disrupts MAVS interaction with RIGI and inhibits MAVS aggregation, resulting in the repression of type I interferon signaling and innate immune responses.

It is found in the endoplasmic reticulum membrane. Its subcellular location is the mitochondrion membrane. Negatively regulates antiviral innate immune responses. Disrupts the interaction of antiviral protein MAVS with innate immune receptor RIGI and inhibits MAVS aggregation, resulting in the repression of type I interferon signaling and innate immune responses. The sequence is that of Small integral membrane protein 30 from Homo sapiens (Human).